A 459-amino-acid chain; its full sequence is DnaJ protein homolog XDJ1 (459 aa).

Residues 7–79 (GDRLYDVLGV…KSHYDLYGDD (73 aa)) enclose the J domain. The CR-type zinc-finger motif lies at 146-240 (GKKLKFDLKR…CAGLGLLSKK (95 aa)). CXXCXGXG motif repeat units follow at residues 159-166 (CIKCHGSG), 181-188 (CESCAGKG), 208-215 (CEKCNGKG), and 228-235 (CPDCAGLG).

The protein resides in the mitochondrion outer membrane. This Saccharomyces cerevisiae (strain ATCC 204508 / S288c) (Baker's yeast) protein is DnaJ protein homolog XDJ1 (XDJ1).